A 325-amino-acid polypeptide reads, in one-letter code: Brain mitochondrial carrier protein 1 (325 aa).

A run of 6 helical transmembrane segments spans residues 38-54 (GLNWKPFVYGGLASIVA), 112-128 (LRQASYGTIKIGIYQSL), 141-161 (LLINMICGVVSGVISSTIANP), 199-215 (GVVPTAQRAAIVVGVEL), 240-256 (VSSFTCGLAGALASNPV), and 298-315 (GFWPNWLRLGPWNIIFFI). Solcar repeat units follow at residues 42–131 (KPFV…LKRL), 139–224 (ETLL…TKKH), and 233–323 (DTIL…LKRL).

This sequence belongs to the mitochondrial carrier (TC 2.A.29) family. As to quaternary structure, homotetramer. As to expression, mainly expressed in brain. Some expression in testis and pituitary.

The protein localises to the mitochondrion inner membrane. It carries out the reaction sulfite(in) + sulfate(out) = sulfite(out) + sulfate(in). The enzyme catalyses thiosulfate(in) + sulfate(out) = thiosulfate(out) + sulfate(in). It catalyses the reaction sulfate(out) + phosphate(in) = sulfate(in) + phosphate(out). The catalysed reaction is oxalate(in) + sulfate(out) = oxalate(out) + sulfate(in). It carries out the reaction malonate(in) + sulfate(out) = malonate(out) + sulfate(in). The enzyme catalyses maleate(in) + sulfate(out) = maleate(out) + sulfate(in). It catalyses the reaction (S)-malate(in) + sulfate(out) = (S)-malate(out) + sulfate(in). The catalysed reaction is (3S)-citramalate(in) + sulfate(out) = (3S)-citramalate(out) + sulfate(in). It carries out the reaction (3R)-citramalate(in) + sulfate(out) = (3R)-citramalate(out) + sulfate(in). The enzyme catalyses sulfate(out) + succinate(in) = sulfate(in) + succinate(out). It catalyses the reaction (S,S)-tartrate(in) + sulfate(out) = (S,S)-tartrate(out) + sulfate(in). The catalysed reaction is (2R,3R)-tartrate(in) + sulfate(out) = (2R,3R)-tartrate(out) + sulfate(in). It carries out the reaction D-aspartate(in) + sulfate(out) = D-aspartate(out) + sulfate(in). The enzyme catalyses L-aspartate(in) + sulfate(out) = L-aspartate(out) + sulfate(in). It catalyses the reaction sulfate(in) = sulfate(out). The catalysed reaction is phosphate(in) = phosphate(out). It carries out the reaction (S)-malate(out) = (S)-malate(in). The enzyme catalyses citrate(in) = citrate(out). It catalyses the reaction L-aspartate(out) = L-aspartate(in). The catalysed reaction is L-glutamate(out) = L-glutamate(in). It carries out the reaction H(+)(in) = H(+)(out). The enzyme catalyses chloride(in) = chloride(out). Increased activity at pH lower than 8.0. sulfate/sulfate exchange activity is inhibited strongly by pyridoxal 5'-phosphate, bathophenanthroline and the organic mercurials mersalyl, p-chloromercuribenzoate and HgCl2. Proton conductance is activated by cardiolipin and long-chain free fatty acids and inhibited by purine nucleotides ATP and ADP. Chloride ion transporter activity is inhibited by long-chain free fatty acids. Functionally, transports inorganic anions (sulfate, sulfite, thiosulfate and phosphate) and, to a lesser extent, a variety of dicarboxylates (e.g. malonate, malate and citramalate) and, even more so, aspartate and glutamate and tricarboxylates. May catalyze the export of sulfite and thiosulfate (the hydrogen sulfide degradation products) from the mitochondria, thereby modulating the level of the hydrogen sulfide. Also can mediate a very low unidirectional transport of anions including sulfate, phosphate, (S)-malate, citrate, L-aspartate and L-glutamate. Maintains oxidative balance (through uncoupling activities) and ATP production (by modifying mitochondrial membrane potential). Is able to transport protons across lipid membranes. Also exhibits transmembrane chloride transport activity to a lesser extent. May modify mitochondrial respiratory efficiency and mitochondrial oxidant production. This Homo sapiens (Human) protein is Brain mitochondrial carrier protein 1.